A 185-amino-acid polypeptide reads, in one-letter code: Adenine phosphoribosyltransferase (185 aa).

This sequence belongs to the purine/pyrimidine phosphoribosyltransferase family. Homodimer.

It localises to the cytoplasm. It catalyses the reaction AMP + diphosphate = 5-phospho-alpha-D-ribose 1-diphosphate + adenine. Its pathway is purine metabolism; AMP biosynthesis via salvage pathway; AMP from adenine: step 1/1. In terms of biological role, catalyzes a salvage reaction resulting in the formation of AMP, that is energically less costly than de novo synthesis. The protein is Adenine phosphoribosyltransferase of Kineococcus radiotolerans (strain ATCC BAA-149 / DSM 14245 / SRS30216).